Consider the following 347-residue polypeptide: Protein RecA (347 aa).

G67 to T74 provides a ligand contact to ATP.

The protein belongs to the RecA family. Post-translationally, the protein migrates as a 40 kDa protein in strains 69A and NCTC 11637. When overexpressed in E.coli a 38 kDa protein is made which is unable to complement the E.coli deletion mutant. It has been suggested this size difference is due to a post-translational modification.

Its subcellular location is the cytoplasm. In terms of biological role, can catalyze the hydrolysis of ATP in the presence of single-stranded DNA, the ATP-dependent uptake of single-stranded DNA by duplex DNA, and the ATP-dependent hybridization of homologous single-stranded DNAs. It interacts with LexA causing its activation and leading to its autocatalytic cleavage. Its function is as follows. Deletion of this gene leads to the inability of the bacteria to perform homologous recombination, and markedly increases UV sensitivity. The protein is Protein RecA of Helicobacter pylori (strain ATCC 700392 / 26695) (Campylobacter pylori).